A 256-amino-acid polypeptide reads, in one-letter code: Trypsinogen-like protein 3 (256 aa).

The N-terminal stretch at 1–14 (MILLLVLALGLAGA) is a signal peptide. The Peptidase S1 domain occupies 15 to 237 (SPLGEYKECP…YNDWIHQVMA (223 aa)). Cystine bridges form between Cys-23–Cys-153, Cys-41–Cys-57, Cys-125–Cys-226, Cys-132–Cys-199, Cys-164–Cys-180, and Cys-189–Cys-213.

This sequence belongs to the peptidase S1 family.

The chain is Trypsinogen-like protein 3 (trp3) from Pseudopleuronectes americanus (Winter flounder).